The chain runs to 359 residues: Serpentine receptor class epsilon-13 (359 aa).

Helical transmembrane passes span 33–53, 74–94, 111–131, 150–170, 180–200, 237–257, and 266–286; these read YLFV…YYLL, AIYL…ILLI, ISLF…AFVA, WLVG…ALDF, VTIF…NFLL, LALS…IDNL, and LNTV…PFVI.

This sequence belongs to the nematode receptor-like protein sre family.

It localises to the membrane. The sequence is that of Serpentine receptor class epsilon-13 (sre-13) from Caenorhabditis elegans.